Consider the following 115-residue polypeptide: Rapid alkalinization factor (115 aa).

The signal sequence occupies residues 1–23; sequence MGVPSGLILCVLIGAFFISMAAA. Residues 24–66 constitute a propeptide, removed in mature form; it reads GDSGAYDWVMPARSGGGCKGSIGECIAEEEEFELDSESNRRIL. Disulfide bonds link C84/C94 and C107/C113.

Proteolytically cleaved, probably by S1P, a subtilisin-like serine protease (subtilase).

It is found in the secreted. Cell signaling peptide that may regulate plant stress, growth, and development. Mediates a rapid alkalinization of extracellular space by mediating a transient increase in the cytoplasmic Ca(2+) concentration leading to a calcium-dependent signaling events through a cell surface receptor and a concomitant activation of some intracellular mitogen-activated protein kinases. Prevents root growth and seedling development in heterologous system. The sequence is that of Rapid alkalinization factor (RALF) from Nicotiana tabacum (Common tobacco).